The primary structure comprises 374 residues: LRR repeats and ubiquitin-like domain-containing protein At2g30105 (374 aa).

The region spanning 13 to 87 (IKLTVKFGGK…LMLMASQGLH (75 aa)) is the Ubiquitin-like domain. LRR repeat units lie at residues 128–151 (WKAT…VWDC), 152–175 (GSGV…ISSF), 177–200 (SMQK…GIAS), 201–224 (LKRL…MGSL), 225–248 (TSLR…GLLT), 250–270 (LEIL…IGNC), 272–293 (FLME…FTKL), 294–316 (RNLK…LFKM), and 318–340 (LQLS…QFEG).

The chain is LRR repeats and ubiquitin-like domain-containing protein At2g30105 from Arabidopsis thaliana (Mouse-ear cress).